The following is a 289-amino-acid chain: ATP synthase gamma chain (289 aa).

It belongs to the ATPase gamma chain family. As to quaternary structure, F-type ATPases have 2 components, CF(1) - the catalytic core - and CF(0) - the membrane proton channel. CF(1) has five subunits: alpha(3), beta(3), gamma(1), delta(1), epsilon(1). CF(0) has three main subunits: a, b and c.

The protein resides in the cell inner membrane. Functionally, produces ATP from ADP in the presence of a proton gradient across the membrane. The gamma chain is believed to be important in regulating ATPase activity and the flow of protons through the CF(0) complex. The protein is ATP synthase gamma chain of Acinetobacter baumannii (strain AB307-0294).